Reading from the N-terminus, the 359-residue chain is Agropine synthesis conjugase (359 aa).

One can recognise an SIS domain in the interval 28 to 171 (TVAKFGRATA…IGGILNEREN (144 aa)).

The chain is Agropine synthesis conjugase (mas2) from Rhizobium rhizogenes (Agrobacterium rhizogenes).